Reading from the N-terminus, the 1410-residue chain is non-specific serine/threonine protein kinase (1410 aa).

The region spanning 27–299 (THYVSQLNNS…LLEKYRTIYF (273 aa)) is the Protein kinase domain. Residues 33–41 (LNNSRFLKT) and lysine 54 contribute to the ATP site. Residue aspartate 147 is the Proton acceptor of the active site. HEAT repeat units follow at residues 441 to 478 (TKLD…EVKH), 485 to 525 (NIFV…KANL), 556 to 594 (RKLQ…YFGR), 596 to 633 (KTND…LLGP), and 635 to 672 (TMEQ…TRFV). 3 WD repeats span residues 1037 to 1076 (FDGT…NEKS), 1187 to 1226 (ADYG…QIRA), and 1230 to 1273 (GESL…CKHV).

This sequence belongs to the protein kinase superfamily. Ser/Thr protein kinase family. In terms of assembly, component of the autophagy-specific VPS34 PI3-kinase complex I composed of VPS15, VPS30, VPS34, ATG14 and ATG38; and of the VPS34 PI3-kinase complex II composed of VPS15, VPS30, VPS34 and VPS38. In terms of processing, autophosphorylated.

It is found in the golgi apparatus. It localises to the trans-Golgi network membrane. The protein localises to the endosome membrane. The enzyme catalyses L-seryl-[protein] + ATP = O-phospho-L-seryl-[protein] + ADP + H(+). It catalyses the reaction L-threonyl-[protein] + ATP = O-phospho-L-threonyl-[protein] + ADP + H(+). Functionally, serine/threonine-protein kinase that plays a role in signaling in modulation of host immune response, intracellular survival and virulence. Required for impediment of phagosomal maturation in THP-1 macrophages. Regulatory subunit of the autophagy-specific VPS34 PI3-kinase complex I essential to recruit the ATG8-phosphatidylinositol conjugate and the ATG12-ATG5 conjugate to the pre-autophagosomal structure. Within the PS34 PI3-kinase complex I, VPS15-mediated phosphorylation of VPS34 may be required for recruiting VPS34 to the membrane but not for activation of its PI3K activity. Is also involved in endosome-to-Golgi retrograde transport as part of the VPS34 PI3-kinase complex II. This second complex is required for the endosome-to-Golgi retrieval of PEP1 and KEX2, and the recruitment of VPS5 and VPS7, two components of the retromer complex, to endosomal membranes (probably through the synthesis of a specific pool of phosphatidylinositol 3-phosphate recruiting the retromer to the endosomes). By regulating VPS34 kinase activity, VPS15 appears to be essential for the efficient delivery of soluble hydrolases to the yeast vacuole. This Candida glabrata (strain ATCC 2001 / BCRC 20586 / JCM 3761 / NBRC 0622 / NRRL Y-65 / CBS 138) (Yeast) protein is non-specific serine/threonine protein kinase.